The following is a 509-amino-acid chain: Maturase K (509 aa).

Belongs to the intron maturase 2 family. MatK subfamily.

It is found in the plastid. The protein localises to the chloroplast. Usually encoded in the trnK tRNA gene intron. Probably assists in splicing its own and other chloroplast group II introns. The protein is Maturase K of Cicer arietinum (Chickpea).